Here is a 118-residue protein sequence, read N- to C-terminus: Large ribosomal subunit protein uL22 (118 aa).

This sequence belongs to the universal ribosomal protein uL22 family. Part of the 50S ribosomal subunit.

Functionally, this protein binds specifically to 23S rRNA; its binding is stimulated by other ribosomal proteins, e.g. L4, L17, and L20. It is important during the early stages of 50S assembly. It makes multiple contacts with different domains of the 23S rRNA in the assembled 50S subunit and ribosome. Its function is as follows. The globular domain of the protein is located near the polypeptide exit tunnel on the outside of the subunit, while an extended beta-hairpin is found that lines the wall of the exit tunnel in the center of the 70S ribosome. The polypeptide is Large ribosomal subunit protein uL22 (Leuconostoc mesenteroides subsp. mesenteroides (strain ATCC 8293 / DSM 20343 / BCRC 11652 / CCM 1803 / JCM 6124 / NCDO 523 / NBRC 100496 / NCIMB 8023 / NCTC 12954 / NRRL B-1118 / 37Y)).